A 224-amino-acid chain; its full sequence is Holliday junction branch migration complex subunit RuvA (224 aa).

The tract at residues 1 to 67 is domain I; that stretch reads MISWLKGEKV…EDGTSLYGFI (67 aa). The domain II stretch occupies residues 68–146; sequence EVNQRDLFRE…RFTDNDKTIH (79 aa). The segment at 147-157 is flexible linker; the sequence is ENKNDIEANQF. The interval 157 to 224 is domain III; the sequence is FSKYIDEIYL…ILMKLSEKST (68 aa).

Belongs to the RuvA family. As to quaternary structure, homotetramer. Forms an RuvA(8)-RuvB(12)-Holliday junction (HJ) complex. HJ DNA is sandwiched between 2 RuvA tetramers; dsDNA enters through RuvA and exits via RuvB. An RuvB hexamer assembles on each DNA strand where it exits the tetramer. Each RuvB hexamer is contacted by two RuvA subunits (via domain III) on 2 adjacent RuvB subunits; this complex drives branch migration. In the full resolvosome a probable DNA-RuvA(4)-RuvB(12)-RuvC(2) complex forms which resolves the HJ.

The protein localises to the cytoplasm. Functionally, the RuvA-RuvB-RuvC complex processes Holliday junction (HJ) DNA during genetic recombination and DNA repair, while the RuvA-RuvB complex plays an important role in the rescue of blocked DNA replication forks via replication fork reversal (RFR). RuvA specifically binds to HJ cruciform DNA, conferring on it an open structure. The RuvB hexamer acts as an ATP-dependent pump, pulling dsDNA into and through the RuvAB complex. HJ branch migration allows RuvC to scan DNA until it finds its consensus sequence, where it cleaves and resolves the cruciform DNA. The protein is Holliday junction branch migration complex subunit RuvA of Prochlorococcus marinus (strain NATL2A).